We begin with the raw amino-acid sequence, 700 residues long: Centrosomal protein of 63 kDa (700 aa).

N-acetylmethionine is present on Met-1. 2 coiled-coil regions span residues 73-283 (KEVG…ETFI) and 343-533 (LQAE…MCKK). Ser-278, Lys-488, and Leu-492 each carry phosphoserine. Positions 570-603 (QYKTGHHSPRGQTLDSIDPVARGPSPLSSHISPG) are disordered. Positions 593–603 (PSPLSSHISPG) are enriched in low complexity.

Belongs to the CEP63 family. In terms of assembly, interacts with CEP152 and CDK1; these interactions recruit both ligands to centrosomes. Interacts with CDK2, CDK5RAP2, WDR62, CEP90, KIAA0753/moonraker and CCDC14. CEP63, CDK5RAP2, CEP152, WDR62 are proposed to form a stepwise assembled complex at the centrosome forming a ring near parental centrioles. Interacts with CCDC57; the interaction is required for their location to proximal end of centrioles. Interacts with FXR1; promoting its stabilization. Post-translationally, polyubiquitinated via 'Lys-48'-linked ubiquitin, leading to its degradation. Deubiquitinated by USP36, promoting its stabilization.

The protein localises to the cytoplasm. Its subcellular location is the cytoskeleton. It localises to the microtubule organizing center. It is found in the centrosome. The protein resides in the centriole. The protein localises to the centriolar satellite. In terms of biological role, required for normal spindle assembly. Plays a key role in mother-centriole-dependent centriole duplication; the function also seems to involve CEP152, CDK5RAP2 and WDR62 through a stepwise assembled complex at the centrosome that recruits CDK2 required for centriole duplication. Reported to be required for centrosomal recruitment of CEP152; however, this function has been questioned. Also recruits CDK1 to centrosomes. Plays a role in DNA damage response. Following DNA damage, such as double-strand breaks (DSBs), is removed from centrosomes; this leads to the inactivation of spindle assembly and delay in mitotic progression. Promotes stabilization of FXR1 protein by inhibiting FXR1 ubiquitination. The protein is Centrosomal protein of 63 kDa of Mus musculus (Mouse).